The sequence spans 461 residues: L-cystine uptake protein TcyP (461 aa).

Transmembrane regions (helical) follow at residues 1–21 (MTLF…LLYM), 33–53 (VFTA…IYGS), 72–92 (YVKL…LGAF), 104–124 (ISGL…AVGI), 183–203 (PTST…YLGV), 224–244 (IIMR…LAIM), 262–282 (FVIA…LLIT), 337–357 (LSIG…IMIA), 369–389 (FLFT…GVGG), and 393–413 (FAAL…GLLI).

This sequence belongs to the dicarboxylate/amino acid:cation symporter (DAACS) (TC 2.A.23) family.

It localises to the membrane. Its function is as follows. Mediates uptake of L-cystine, the oxidized form of L-cysteine. This is L-cystine uptake protein TcyP (tcyP) from Bacillus licheniformis (strain ATCC 14580 / DSM 13 / JCM 2505 / CCUG 7422 / NBRC 12200 / NCIMB 9375 / NCTC 10341 / NRRL NRS-1264 / Gibson 46).